The chain runs to 294 residues: MEDYTKAEILIEALPYICKFHDQKILIKYGGHAMVNEQAKNWIAKDLVLLKYVGINPIVVHGGGPEINRAMEKMGKTPEFIHGLRVTDEETLDIVKMVLIGKINGDIVSKLERYGGKSVGLSGKSGQLIKAKKKIQYLMKDSQKIEVDLGMVGEVEHVDTKLIDILVEKRYIPVISPIGVDHQGNDLNLNADIAAGDIAGAMNAQKLIMVTDVDGIMDDVNDPSTLHRRLTIPQIEDMIEKGLITGGMIPKIEACVNALDKGVQSVHIVNGKTPHAVLLEIFTEDGVGTMVVRE.

Substrate contacts are provided by residues 63-64 (GG), Arg85, and Asn188.

Belongs to the acetylglutamate kinase family. ArgB subfamily.

Its subcellular location is the cytoplasm. The catalysed reaction is N-acetyl-L-glutamate + ATP = N-acetyl-L-glutamyl 5-phosphate + ADP. The protein operates within amino-acid biosynthesis; L-arginine biosynthesis; N(2)-acetyl-L-ornithine from L-glutamate: step 2/4. Catalyzes the ATP-dependent phosphorylation of N-acetyl-L-glutamate. The protein is Acetylglutamate kinase of Methanococcus maripaludis (strain DSM 14266 / JCM 13030 / NBRC 101832 / S2 / LL).